The primary structure comprises 110 residues: Envelope glycoprotein N (110 aa).

The first 17 residues, 1–17 (MTASTVALALFVASILG), serve as a signal peptide directing secretion. The Virion surface portion of the chain corresponds to 18–80 (HCWVTANSTG…SLSSFSSVWA (63 aa)). Over residues 28–41 (VASSTERSSPSTAG) the composition is skewed to polar residues. The disordered stretch occupies residues 28–51 (VASSTERSSPSTAGLSARPSPGPT). Residues 81–101 (LINALLVVVATFFYLVYLCFF) traverse the membrane as a helical segment. The Intravirion segment spans residues 102 to 110 (KFVDEVVHA).

It belongs to the herpesviridae glycoprotein N family. As to quaternary structure, interacts (via N-terminus) with gM (via N-terminus). The gM-gN heterodimer forms the gCII complex. O-glycosylated. Contains alpha 2,6-sialic acid residues. N-glycosylated.

It localises to the virion membrane. It is found in the host membrane. The protein resides in the host Golgi apparatus. Its subcellular location is the host trans-Golgi network. In terms of biological role, envelope glycoprotein necessary for proper maturation of gM and modulation of its membrane fusion activity. Also plays a critical role in virion morphogenesis. The chain is Envelope glycoprotein N from Homo sapiens (Human).